The following is a 205-amino-acid chain: Proteasome subunit beta type-3 (205 aa).

Ser2 carries the post-translational modification N-acetylserine. Lys77 is modified (N6-acetyllysine).

The protein belongs to the peptidase T1B family. As to quaternary structure, the 26S proteasome consists of a 20S proteasome core and two 19S regulatory subunits. The 20S proteasome core is a barrel-shaped complex made of 28 subunits that are arranged in four stacked rings. The two outer rings are each formed by seven alpha subunits, and the two inner rings are formed by seven beta subunits. The proteolytic activity is exerted by three beta-subunits PSMB5, PSMB6 and PSMB7.

It localises to the cytoplasm. It is found in the nucleus. Non-catalytic component of the 20S core proteasome complex involved in the proteolytic degradation of most intracellular proteins. This complex plays numerous essential roles within the cell by associating with different regulatory particles. Associated with two 19S regulatory particles, forms the 26S proteasome and thus participates in the ATP-dependent degradation of ubiquitinated proteins. The 26S proteasome plays a key role in the maintenance of protein homeostasis by removing misfolded or damaged proteins that could impair cellular functions, and by removing proteins whose functions are no longer required. Associated with the PA200 or PA28, the 20S proteasome mediates ubiquitin-independent protein degradation. This type of proteolysis is required in several pathways including spermatogenesis (20S-PA200 complex) or generation of a subset of MHC class I-presented antigenic peptides (20S-PA28 complex). The chain is Proteasome subunit beta type-3 (Psmb3) from Rattus norvegicus (Rat).